Here is a 304-residue protein sequence, read N- to C-terminus: tRNA dimethylallyltransferase (304 aa).

An ATP-binding site is contributed by 9-16; it reads APTAAGKS. 11-16 contacts substrate; the sequence is TAAGKS.

It belongs to the IPP transferase family. In terms of assembly, monomer. It depends on Mg(2+) as a cofactor.

It catalyses the reaction adenosine(37) in tRNA + dimethylallyl diphosphate = N(6)-dimethylallyladenosine(37) in tRNA + diphosphate. Functionally, catalyzes the transfer of a dimethylallyl group onto the adenine at position 37 in tRNAs that read codons beginning with uridine, leading to the formation of N6-(dimethylallyl)adenosine (i(6)A). This Deinococcus geothermalis (strain DSM 11300 / CIP 105573 / AG-3a) protein is tRNA dimethylallyltransferase.